Here is a 356-residue protein sequence, read N- to C-terminus: Phosphate acyltransferase (356 aa).

This sequence belongs to the PlsX family. As to quaternary structure, homodimer. Probably interacts with PlsY.

It localises to the cytoplasm. The catalysed reaction is a fatty acyl-[ACP] + phosphate = an acyl phosphate + holo-[ACP]. The protein operates within lipid metabolism; phospholipid metabolism. Its function is as follows. Catalyzes the reversible formation of acyl-phosphate (acyl-PO(4)) from acyl-[acyl-carrier-protein] (acyl-ACP). This enzyme utilizes acyl-ACP as fatty acyl donor, but not acyl-CoA. This Shigella flexneri serotype 5b (strain 8401) protein is Phosphate acyltransferase.